The primary structure comprises 321 residues: Cytochrome f (321 aa).

A signal peptide spans 1-38 (MKKNFYTISKTMSRSLKLILFSVFIGFSIFLIPQPTWA). Heme-binding residues include Tyr-39, Cys-59, Cys-62, and His-63. Residues 288 to 308 (VIGMIIFFIGVGLSQIMLVLK) traverse the membrane as a helical segment.

This sequence belongs to the cytochrome f family. In terms of assembly, the 4 large subunits of the cytochrome b6-f complex are cytochrome b6, subunit IV (17 kDa polypeptide, PetD), cytochrome f and the Rieske protein, while the 4 small subunits are PetG, PetL, PetM and PetN. The complex functions as a dimer. Heme serves as cofactor.

The protein resides in the cellular thylakoid membrane. Its function is as follows. Component of the cytochrome b6-f complex, which mediates electron transfer between photosystem II (PSII) and photosystem I (PSI), cyclic electron flow around PSI, and state transitions. In Prochlorococcus marinus (strain NATL2A), this protein is Cytochrome f.